Here is a 251-residue protein sequence, read N- to C-terminus: 1-(5-phosphoribosyl)-5-[(5-phosphoribosylamino)methylideneamino] imidazole-4-carboxamide isomerase (251 aa).

The Proton acceptor role is filled by Asp8. The active-site Proton donor is the Asp131.

The protein belongs to the HisA/HisF family.

It localises to the cytoplasm. It catalyses the reaction 1-(5-phospho-beta-D-ribosyl)-5-[(5-phospho-beta-D-ribosylamino)methylideneamino]imidazole-4-carboxamide = 5-[(5-phospho-1-deoxy-D-ribulos-1-ylimino)methylamino]-1-(5-phospho-beta-D-ribosyl)imidazole-4-carboxamide. The protein operates within amino-acid biosynthesis; L-histidine biosynthesis; L-histidine from 5-phospho-alpha-D-ribose 1-diphosphate: step 4/9. The polypeptide is 1-(5-phosphoribosyl)-5-[(5-phosphoribosylamino)methylideneamino] imidazole-4-carboxamide isomerase (Burkholderia pseudomallei (strain 1710b)).